A 226-amino-acid chain; its full sequence is MTILVVTGTGTGVGKTVVCAALASAARQAGIDVAVCKPVQTGTARGDDDLAEVGRLAGVTQLAGLARYPQPMAPAAAAEHAGMALPARDQIVRLIADLDRPGRLTLVEGAGGLLVELAEPGVTLRDVAVDVAAVALVVVTADLGTLNHTKLTLEALAAQQVSCAGLVIGSWPDPPGLVAASNRSALARIATVRAALPAGAASLDAGDFAAMSAAAFDRNWVAGLVG.

Residue 12–17 (GVGKTV) coordinates ATP. Thr-16 contributes to the Mg(2+) binding site. Lys-37 is an active-site residue. Thr-41 serves as a coordination point for substrate. Residues Asp-49, 108-111 (EGAG), 169-170 (GS), and 197-199 (PAG) each bind ATP. Mg(2+) contacts are provided by Asp-49 and Glu-108.

Belongs to the dethiobiotin synthetase family. Homodimer. Mg(2+) serves as cofactor.

It is found in the cytoplasm. The catalysed reaction is (7R,8S)-7,8-diammoniononanoate + CO2 + ATP = (4R,5S)-dethiobiotin + ADP + phosphate + 3 H(+). The protein operates within cofactor biosynthesis; biotin biosynthesis; biotin from 7,8-diaminononanoate: step 1/2. In terms of biological role, catalyzes a mechanistically unusual reaction, the ATP-dependent insertion of CO2 between the N7 and N8 nitrogen atoms of 7,8-diaminopelargonic acid (DAPA, also called 7,8-diammoniononanoate) to form a ureido ring. The sequence is that of ATP-dependent dethiobiotin synthetase BioD from Mycobacterium bovis (strain BCG / Pasteur 1173P2).